A 448-amino-acid chain; its full sequence is Fibulin-5 (448 aa).

Residues 1 to 23 (MPGIKRILTVTILALCLPSPGNA) form the signal peptide. The 41-residue stretch at 42-82 (DIDECRTIPEACRGDMMCVNQNGGYLCIPRTNPVYRGPYSN) folds into the EGF-like 1; calcium-binding domain. 17 disulfide bridges follow: cysteine 46-cysteine 59, cysteine 53-cysteine 68, cysteine 131-cysteine 144, cysteine 138-cysteine 153, cysteine 155-cysteine 166, cysteine 172-cysteine 181, cysteine 177-cysteine 190, cysteine 192-cysteine 205, cysteine 211-cysteine 221, cysteine 217-cysteine 230, cysteine 232-cysteine 245, cysteine 251-cysteine 262, cysteine 258-cysteine 271, cysteine 273-cysteine 286, cysteine 292-cysteine 305, cysteine 299-cysteine 314, and cysteine 320-cysteine 332. A Cell attachment site motif is present at residues 54-56 (RGD). An EGF-like 2; calcium-binding domain is found at 127–167 (DVDECATDSHQCNPTQICINTEGGYTCSCTDGYWLLEGQCL). One can recognise an EGF-like 3; calcium-binding domain in the interval 168–206 (DIDECRYGYCQQLCANVPGSYSCTCNPGFTLNEDGRSCQ). One can recognise an EGF-like 4; calcium-binding domain in the interval 207–246 (DVNECATENPCVQTCVNTYGSFICRCDPGYELEEDGVHCS). The interval 245–448 (CSDMDECSFS…LRIYVSQYPF (204 aa)) is interaction with LOXL1. The EGF-like 5; calcium-binding domain occupies 247–287 (DMDECSFSEFLCQHECVNQPGTYFCSCPPGYILLDDNRSCQ). N-linked (GlcNAc...) asparagine glycosylation is found at asparagine 283 and asparagine 296. Positions 288 to 333 (DINECEHRNHTCNLQQTCYNLQGGFKCIDPIRCEEPYLRISDNRCM) constitute an EGF-like 6; calcium-binding domain.

The protein belongs to the fibulin family. In terms of assembly, homodimer. Monomer, homodimerizes in presence of Ca(2+). Interacts with ELN. Interacts (via N-terminus) with the integrins ITGAV/ITGB3, ITGAV/ITGB5 and ITGA9/ITGB1. Interacts with FBN1 (via N-terminal domain). Forms a ternary complex with ELN and FBN1. Interacts with EFEMP2 with moderate affinity. Interacts with LOXL1. N-glycosylated. Expressed in skin fibroblasts (at protein level). Expressed predominantly in heart, ovary, and colon but also in kidney, pancreas, testis, lung and placenta. Not detectable in brain, liver, thymus, prostate, or peripheral blood leukocytes.

The protein localises to the secreted. It localises to the extracellular space. It is found in the extracellular matrix. Functionally, essential for elastic fiber formation, is involved in the assembly of continuous elastin (ELN) polymer and promotes the interaction of microfibrils and ELN. Stabilizes and organizes elastic fibers in the skin, lung and vasculature. Promotes adhesion of endothelial cells through interaction of integrins and the RGD motif. Vascular ligand for integrin receptors which may play a role in vascular development and remodeling. May act as an adapter that mediates the interaction between FBN1 and ELN. In Homo sapiens (Human), this protein is Fibulin-5 (FBLN5).